Here is a 271-residue protein sequence, read N- to C-terminus: Ribosomal RNA small subunit methyltransferase A (271 aa).

Residues His18, Leu20, Gly45, Glu66, Asp91, and Asn113 each coordinate S-adenosyl-L-methionine.

This sequence belongs to the class I-like SAM-binding methyltransferase superfamily. rRNA adenine N(6)-methyltransferase family. RsmA subfamily.

It localises to the cytoplasm. It carries out the reaction adenosine(1518)/adenosine(1519) in 16S rRNA + 4 S-adenosyl-L-methionine = N(6)-dimethyladenosine(1518)/N(6)-dimethyladenosine(1519) in 16S rRNA + 4 S-adenosyl-L-homocysteine + 4 H(+). Specifically dimethylates two adjacent adenosines (A1518 and A1519) in the loop of a conserved hairpin near the 3'-end of 16S rRNA in the 30S particle. May play a critical role in biogenesis of 30S subunits. The chain is Ribosomal RNA small subunit methyltransferase A from Baumannia cicadellinicola subsp. Homalodisca coagulata.